The following is a 201-amino-acid chain: Basic helix-loop-helix transcription factor scleraxis (201 aa).

Disordered regions lie at residues 1–92 and 148–177; these read MSFA…NSVN and AFFH…QPKQ. Gly residues predominate over residues 59 to 69; it reads RRAGGGGPGGR. Basic and acidic residues predominate over residues 70–88; that stretch reads PGREPRQRHTANARERDRT. The 53-residue stretch at 75 to 127 folds into the bHLH domain; sequence RQRHTANARERDRTNSVNTAFTALRTLIPTEPADRKLSKIETLRLASSYISHL. Pro residues predominate over residues 157–167; it reads SPPPPPPPPPA.

As to quaternary structure, efficient DNA binding requires dimerization with another bHLH protein. Dimerizes and binds the E-box consensus sequence with E12.

The protein resides in the nucleus. In terms of biological role, plays an early essential role in mesoderm formation, as well as a later role in formation of somite-derived chondrogenic lineages. The sequence is that of Basic helix-loop-helix transcription factor scleraxis (SCX) from Homo sapiens (Human).